The chain runs to 199 residues: Probable molybdenum cofactor guanylyltransferase (199 aa).

GTP is bound by residues leucine 6–glycine 8, lysine 18, aspartate 65, and aspartate 97. Residue aspartate 97 participates in Mg(2+) binding.

The protein belongs to the MobA family. Requires Mg(2+) as cofactor.

It localises to the cytoplasm. The catalysed reaction is Mo-molybdopterin + GTP + H(+) = Mo-molybdopterin guanine dinucleotide + diphosphate. In terms of biological role, transfers a GMP moiety from GTP to Mo-molybdopterin (Mo-MPT) cofactor (Moco or molybdenum cofactor) to form Mo-molybdopterin guanine dinucleotide (Mo-MGD) cofactor. The chain is Probable molybdenum cofactor guanylyltransferase from Staphylococcus aureus (strain Mu50 / ATCC 700699).